Here is a 105-residue protein sequence, read N- to C-terminus: U21-theraphotoxin-Cg1a 4 (105 aa).

The first 21 residues, 1–21 (MKVSVLITLAVLGVMFLLTSA), serve as a signal peptide directing secretion. Residues 22–48 (EERGSDQMDSPAWLKSMEIIFQSEERE) constitute a propeptide that is removed on maturation. Cystine bridges form between Cys49–Cys63, Cys56–Cys68, and Cys62–Cys76. Val82 carries the valine amide modification. The propeptide occupies 83–105 (GKWEMLINMNIFRIVFSYSMCTV).

The protein belongs to the neurotoxin 10 (Hwtx-1) family. 05 (F4a) subfamily. In terms of tissue distribution, expressed by the venom gland.

It is found in the secreted. In terms of biological role, probable ion channel inhibitor. The chain is U21-theraphotoxin-Cg1a 4 from Chilobrachys guangxiensis (Chinese earth tiger tarantula).